The following is a 473-amino-acid chain: Aspartyl/glutamyl-tRNA(Asn/Gln) amidotransferase subunit B (473 aa).

Belongs to the GatB/GatE family. GatB subfamily. As to quaternary structure, heterotrimer of A, B and C subunits.

The catalysed reaction is L-glutamyl-tRNA(Gln) + L-glutamine + ATP + H2O = L-glutaminyl-tRNA(Gln) + L-glutamate + ADP + phosphate + H(+). It catalyses the reaction L-aspartyl-tRNA(Asn) + L-glutamine + ATP + H2O = L-asparaginyl-tRNA(Asn) + L-glutamate + ADP + phosphate + 2 H(+). Functionally, allows the formation of correctly charged Asn-tRNA(Asn) or Gln-tRNA(Gln) through the transamidation of misacylated Asp-tRNA(Asn) or Glu-tRNA(Gln) in organisms which lack either or both of asparaginyl-tRNA or glutaminyl-tRNA synthetases. The reaction takes place in the presence of glutamine and ATP through an activated phospho-Asp-tRNA(Asn) or phospho-Glu-tRNA(Gln). The protein is Aspartyl/glutamyl-tRNA(Asn/Gln) amidotransferase subunit B of Mycoplasmopsis synoviae (strain 53) (Mycoplasma synoviae).